The primary structure comprises 338 residues: Lipoate-protein ligase A (338 aa).

The 188-residue stretch at 29–216 folds into the BPL/LPL catalytic domain; that stretch reads PATQRVLFLW…AFFAHYGERV (188 aa). ATP contacts are provided by residues R71, 76–79, and K134; that span reads GAVF. K134 lines the (R)-lipoate pocket.

Belongs to the LplA family. Monomer.

The protein resides in the cytoplasm. The catalysed reaction is L-lysyl-[lipoyl-carrier protein] + (R)-lipoate + ATP = N(6)-[(R)-lipoyl]-L-lysyl-[lipoyl-carrier protein] + AMP + diphosphate + H(+). It participates in protein modification; protein lipoylation via exogenous pathway; protein N(6)-(lipoyl)lysine from lipoate: step 1/2. The protein operates within protein modification; protein lipoylation via exogenous pathway; protein N(6)-(lipoyl)lysine from lipoate: step 2/2. Functionally, catalyzes both the ATP-dependent activation of exogenously supplied lipoate to lipoyl-AMP and the transfer of the activated lipoyl onto the lipoyl domains of lipoate-dependent enzymes. This is Lipoate-protein ligase A from Escherichia coli O8 (strain IAI1).